The following is a 90-amino-acid chain: MTRRIICQKLGKEADALNYSPYPGELGERIYNHISEQAWQAWLSHQTMLINEYRLSLIDPKARQFLEQEMINFLFGTGSEKPAGYTSEKE.

This sequence belongs to the Fe(2+)-trafficking protein family.

Could be a mediator in iron transactions between iron acquisition and iron-requiring processes, such as synthesis and/or repair of Fe-S clusters in biosynthetic enzymes. This Coxiella burnetii (strain CbuK_Q154) (Coxiella burnetii (strain Q154)) protein is Probable Fe(2+)-trafficking protein.